A 551-amino-acid chain; its full sequence is Cilia- and flagella-associated protein 45 (551 aa).

2 disordered regions span residues 1 to 30 (MPLSTAGILSSSSAASNRSRNKARYRTKAV) and 461 to 489 (RLEEEKKATGRLQHANELRRQVRENQQKE). The stretch at 157–526 (NNNKKLSDLE…IKRKKLEELR (370 aa)) forms a coiled coil.

The protein belongs to the CFAP45 family. In terms of assembly, microtubule inner protein component of sperm flagellar doublet microtubules. Interacts with AK8; dimerization with AK8 may create a cavity at the interface of the dimer that can accommodate AMP. Interacts with CFAP52. Interacts with ENKUR. Directly interacts with DNALI1. Interacts with DNAH11. Interacts with DNAI1. As to expression, expressed in respiratory cells and in sperm (at protein level). Expressed in nasopharyngeal epithelium and trachea.

It is found in the cytoplasm. Its subcellular location is the cytoskeleton. It localises to the cilium axoneme. The protein resides in the flagellum axoneme. The protein localises to the cell projection. It is found in the cilium. Its subcellular location is the flagellum. In terms of biological role, microtubule inner protein (MIP) part of the dynein-decorated doublet microtubules (DMTs) in cilia axoneme, which is required for motile cilia beating. It is an AMP-binding protein that may facilitate dynein ATPase-dependent ciliary and flagellar beating via adenine nucleotide homeostasis. May function as a donor of AMP to AK8 and hence promote ADP production. In Homo sapiens (Human), this protein is Cilia- and flagella-associated protein 45.